The chain runs to 571 residues: Membrane protein insertase YidC (571 aa).

The helical transmembrane segment at 4 to 24 (TRVFLIFAWLMVAVLLWMEWS) threads the bilayer. Positions 29–78 (APTPAPTTTSAPAAAQSVPGANPGAIPSAQVPGAPGQAAAQAQASATPAS) are disordered. Composition is skewed to low complexity over residues 34–43 (PTTTSAPAAA) and 55–78 (PSAQVPGAPGQAAAQAQASATPAS). Helical transmembrane passes span 369–389 (LVGNWGWAIVGLVVLLKLVLY), 440–460 (GGCLPILIQMPIFFALYWVLV), 483–503 (YFILPVINVAVMWFTQKLTPA), and 518–538 (PLVFGVMMAFMPSGLVLYWVV).

It belongs to the OXA1/ALB3/YidC family. Type 1 subfamily. As to quaternary structure, interacts with the Sec translocase complex via SecD. Specifically interacts with transmembrane segments of nascent integral membrane proteins during membrane integration.

The protein localises to the cell inner membrane. Functionally, required for the insertion and/or proper folding and/or complex formation of integral membrane proteins into the membrane. Involved in integration of membrane proteins that insert both dependently and independently of the Sec translocase complex, as well as at least some lipoproteins. Aids folding of multispanning membrane proteins. In Stenotrophomonas maltophilia (strain K279a), this protein is Membrane protein insertase YidC.